A 126-amino-acid polypeptide reads, in one-letter code: Large ribosomal subunit protein bL12 (126 aa).

The protein belongs to the bacterial ribosomal protein bL12 family. Homodimer. Part of the ribosomal stalk of the 50S ribosomal subunit. Forms a multimeric L10(L12)X complex, where L10 forms an elongated spine to which 2 to 4 L12 dimers bind in a sequential fashion. Binds GTP-bound translation factors.

Its function is as follows. Forms part of the ribosomal stalk which helps the ribosome interact with GTP-bound translation factors. Is thus essential for accurate translation. This chain is Large ribosomal subunit protein bL12, found in Acidobacterium capsulatum (strain ATCC 51196 / DSM 11244 / BCRC 80197 / JCM 7670 / NBRC 15755 / NCIMB 13165 / 161).